A 605-amino-acid chain; its full sequence is Protein Spindly (605 aa).

Methionine 1 carries the N-acetylmethionine modification. Residues 2–442 (EADIITNLRC…ELKLKYEPEE (441 aa)) are a coiled coil. Phosphoserine is present on residues serine 513, serine 515, and serine 555. Residues 544 to 580 (ALSERSGNTPNSPRLAAESKLQTEVKEGKETSSKLEK) form a disordered region. Positions 564–580 (LQTEVKEGKETSSKLEK) are enriched in basic and acidic residues.

It belongs to the Spindly family. As to quaternary structure, interacts with KNTC1 and ZW10. These interactions appear weak and may be transient or indirect. Interacts with dynein intermediate chain and dynactin (DCTN1). Interacts with the catalytically active form of USP45. Monoubiquitinated with'Lys-48' linkage. Deubiquitinated by USP45.

The protein resides in the cytoplasm. The protein localises to the cytoskeleton. Its subcellular location is the microtubule organizing center. It is found in the centrosome. It localises to the chromosome. The protein resides in the centromere. The protein localises to the kinetochore. Its subcellular location is the nucleus. It is found in the spindle pole. Its function is as follows. Required for the localization of dynein and dynactin to the mitotic kintochore. Dynein is believed to control the initial lateral interaction between the kinetochore and spindle microtubules and to facilitate the subsequent formation of end-on kinetochore-microtubule attachments mediated by the NDC80 complex. Also required for correct spindle orientation. Does not appear to be required for the removal of spindle assembly checkpoint (SAC) proteins from the kinetochore upon bipolar spindle attachment. Acts as an adapter protein linking the dynein motor complex to various cargos and converts dynein from a non-processive to a highly processive motor in the presence of dynactin. Facilitates the interaction between dynein and dynactin and activates dynein processivity (the ability to move along a microtubule for a long distance without falling off the track). Plays a role in cell migration. The polypeptide is Protein Spindly (Homo sapiens (Human)).